A 367-amino-acid chain; its full sequence is Homeobox protein Nkx-6.1 (367 aa).

Residues 36 to 133 (YPAAYPPLPA…SSSSSSSASA (98 aa)) are disordered. Low complexity-rich tracts occupy residues 48 to 59 (PSSSSSSSSSSS), 78 to 91 (GGLSSLGSPPQQLS), and 110 to 133 (ASGAALPSASPSGSSSSSSSSASA). The segment at 102–268 (LSRPSMPVAS…KYLAGPERAR (167 aa)) is repressor domain. Arg-189 bears the Asymmetric dimethylarginine mark. Residues 236 to 295 (RKHTRPTFSGQQIFALEKTFEQTKYLAGPERARLAYSLGMTESQVKVWFQNRRTKWRKKH) constitute a DNA-binding region (homeobox). A disordered region spans residues 294–367 (KHAAEMATAK…LHASEPESSS (74 aa)). The segment covering 304-317 (KKQDSETERLKGAS) has biased composition (basic and acidic residues). The interval 306–367 (QDSETERLKG…LHASEPESSS (62 aa)) is involved in DNA-binding.

Pancreatic beta cells.

It is found in the nucleus. Transcription factor which binds to specific A/T-rich DNA sequences in the promoter regions of a number of genes. Involved in the development of insulin-producing beta cells in the islets of Langerhans at the secondary transition. Together with NKX2-2 and IRX3 acts to restrict the generation of motor neurons to the appropriate region of the neural tube. Belongs to the class II proteins of neuronal progenitor factors, which are induced by SHH signals. The protein is Homeobox protein Nkx-6.1 (NKX6-1) of Homo sapiens (Human).